A 278-amino-acid chain; its full sequence is uncharacterized protein (278 aa).

The N-terminal stretch at 1–20 (MSPLIVGTLIIILLSGLATA) is a signal peptide. Residue glycine 96 is the site of GPI-anchor amidated glycine attachment. Positions 97 to 278 (TFLTSPTAKR…QLIMQTFNGS (182 aa)) are cleaved as a propeptide — removed in mature form.

It localises to the cell membrane. This is an uncharacterized protein from Schizosaccharomyces pombe (strain 972 / ATCC 24843) (Fission yeast).